A 217-amino-acid polypeptide reads, in one-letter code: 3-isopropylmalate dehydratase small subunit (217 aa).

This sequence belongs to the LeuD family. LeuD type 1 subfamily. As to quaternary structure, heterodimer of LeuC and LeuD.

The enzyme catalyses (2R,3S)-3-isopropylmalate = (2S)-2-isopropylmalate. The protein operates within amino-acid biosynthesis; L-leucine biosynthesis; L-leucine from 3-methyl-2-oxobutanoate: step 2/4. Catalyzes the isomerization between 2-isopropylmalate and 3-isopropylmalate, via the formation of 2-isopropylmaleate. The protein is 3-isopropylmalate dehydratase small subunit of Paracidovorax citrulli (strain AAC00-1) (Acidovorax citrulli).